Consider the following 526-residue polypeptide: Glutamate--tRNA ligase, mitochondrial (526 aa).

A mitochondrion-targeting transit peptide spans 1 to 38 (MLSYTSCAKLICSRYIVSKISFYSLKRCNSTAVVRTRF). 37-39 (RFA) is an L-glutamate binding site. The 'HIGH' region signature appears at 42–50 (PTGFLHLGS). Histidine 47 serves as a coordination point for ATP. L-glutamate contacts are provided by residues glutamate 73, 222–226 (YHFAN), and arginine 240. ATP contacts are provided by residues glutamate 243 and 278–282 (KLSKR). The 'KMSKS' region motif lies at 278–282 (KLSKR).

The protein belongs to the class-I aminoacyl-tRNA synthetase family. Glutamate--tRNA ligase type 1 subfamily.

The protein resides in the mitochondrion. It carries out the reaction tRNA(Glu) + L-glutamate + ATP = L-glutamyl-tRNA(Glu) + AMP + diphosphate. Functionally, catalyzes the attachment of glutamate to tRNA(Glu) in a two-step reaction: glutamate is first activated by ATP to form Glu-AMP and then transferred to the acceptor end of tRNA(Glu). The sequence is that of Glutamate--tRNA ligase, mitochondrial (mse1) from Schizosaccharomyces pombe (strain 972 / ATCC 24843) (Fission yeast).